A 937-amino-acid polypeptide reads, in one-letter code: Putative leucine-rich repeat receptor-like serine/threonine-protein kinase At3g53590 (937 aa).

The first 20 residues, 1-20 (MIPPNINVLIRSICINLVTS), serve as a signal peptide directing secretion. Over 21–547 (LPLNFAYIFI…LLAQTSGIRT (527 aa)) the chain is Extracellular. N-linked (GlcNAc...) asparagine glycosylation is found at Asn50, Asn63, Asn90, and Asn114. LRR repeat units follow at residues 102–126 (LLYL…IGRI), 127–150 (SSLK…LGNL), 152–173 (NLNR…SFGN), 174–198 (LRSI…LSKL), 200–222 (KLVH…LAQL), 223–249 (PSLT…HFSR), 251–270 (VKLS…LSRI), and 271–294 (ENLS…KLSD). N-linked (GlcNAc...) asparagine glycans are attached at residues Asn162, Asn184, and Asn210. N-linked (GlcNAc...) asparagine glycosylation is found at Asn272 and Asn295. 3 LRR repeats span residues 296-316 (MTTI…SFSD), 317-341 (LNSL…IWQD), and 343-360 (SFEN…NFSD). 6 N-linked (GlcNAc...) asparagine glycosylation sites follow: Asn327, Asn357, Asn370, Asn413, Asn499, and Asn516. A helical membrane pass occupies residues 548–568 (IVWMMIVAGSVVAATVLSVTA). Residues 569–937 (TLLYVRKRRE…SGFFHAVKPR (369 aa)) are Cytoplasmic-facing. The Protein kinase domain occupies 614-886 (FDSSTLIGRG…SKVVKELEGI (273 aa)). Residues 620 to 628 (IGRGSYGKV) and Lys642 contribute to the ATP site. Asp738 serves as the catalytic Proton acceptor.

It belongs to the protein kinase superfamily. Ser/Thr protein kinase family.

Its subcellular location is the cell membrane. The enzyme catalyses L-seryl-[protein] + ATP = O-phospho-L-seryl-[protein] + ADP + H(+). The catalysed reaction is L-threonyl-[protein] + ATP = O-phospho-L-threonyl-[protein] + ADP + H(+). The polypeptide is Putative leucine-rich repeat receptor-like serine/threonine-protein kinase At3g53590 (Arabidopsis thaliana (Mouse-ear cress)).